Reading from the N-terminus, the 120-residue chain is Large ribosomal subunit protein uL18 (120 aa).

This sequence belongs to the universal ribosomal protein uL18 family. Part of the 50S ribosomal subunit; part of the 5S rRNA/L5/L18/L25 subcomplex. Contacts the 5S and 23S rRNAs.

Its function is as follows. This is one of the proteins that bind and probably mediate the attachment of the 5S RNA into the large ribosomal subunit, where it forms part of the central protuberance. This is Large ribosomal subunit protein uL18 from Beijerinckia indica subsp. indica (strain ATCC 9039 / DSM 1715 / NCIMB 8712).